Reading from the N-terminus, the 211-residue chain is tRNA (guanine-N(7)-)-methyltransferase (211 aa).

Glutamate 44, aspartate 69, aspartate 96, and aspartate 118 together coordinate S-adenosyl-L-methionine. Aspartate 118 is an active-site residue. Position 122 (lysine 122) interacts with substrate. The interaction with RNA stretch occupies residues 124-129; sequence RHEKRR. Substrate-binding positions include aspartate 154 and 191–194; that span reads TEYE.

Belongs to the class I-like SAM-binding methyltransferase superfamily. TrmB family.

The enzyme catalyses guanosine(46) in tRNA + S-adenosyl-L-methionine = N(7)-methylguanosine(46) in tRNA + S-adenosyl-L-homocysteine. Its pathway is tRNA modification; N(7)-methylguanine-tRNA biosynthesis. Its function is as follows. Catalyzes the formation of N(7)-methylguanine at position 46 (m7G46) in tRNA. This chain is tRNA (guanine-N(7)-)-methyltransferase, found in Streptococcus equi subsp. zooepidemicus (strain MGCS10565).